A 701-amino-acid chain; its full sequence is CRS2-associated factor 1, chloroplastic (701 aa).

The transit peptide at 1–37 directs the protein to the chloroplast; sequence MSLKLNTPFPIFAPSLFPNHNPRAPSEIRFSRWGNAN. Disordered stretches follow at residues 68-136 and 191-221; these read VHTH…PEVK and LPQS…QKPG. 2 consecutive CRM domains span residues 241–337 and 359–455; these read EPLT…TRPR and EGLT…LTTP. Residues 471-532 form a disordered region; that stretch reads LPEDDEPSVS…SLQSWSTKDV (62 aa). Polar residues-rich tracts occupy residues 479–492 and 520–530; these read VSPN…QNPP and TINSLQSWSTK. The tract at residues 564–586 is CRS2 binding; sequence RVLILMKQAVESGTALVLDAADL.

In terms of assembly, interacts with CRS2 and RNA. Part of large ribonucleo-protein complexes that include group IIB introns, CRS2 and CAF1.

The protein resides in the plastid. Its subcellular location is the chloroplast stroma. Required for the splicing of group IIB introns in chloroplasts. Forms splicing particles with CRS2. Interacts with RNA and confers intron specificity of the splicing particles. This chain is CRS2-associated factor 1, chloroplastic, found in Arabidopsis thaliana (Mouse-ear cress).